Consider the following 334-residue polypeptide: Glycerol-3-phosphate dehydrogenase [NAD(P)+] (334 aa).

The NADPH site is built by serine 14, tyrosine 15, histidine 35, and lysine 109. Sn-glycerol 3-phosphate contacts are provided by lysine 109, glycine 138, and threonine 140. Alanine 142 contributes to the NADPH binding site. Lysine 194, aspartate 247, serine 257, arginine 258, and asparagine 259 together coordinate sn-glycerol 3-phosphate. Lysine 194 serves as the catalytic Proton acceptor. Arginine 258 serves as a coordination point for NADPH. NADPH-binding residues include valine 282 and glutamate 284.

The protein belongs to the NAD-dependent glycerol-3-phosphate dehydrogenase family.

The protein localises to the cytoplasm. The enzyme catalyses sn-glycerol 3-phosphate + NAD(+) = dihydroxyacetone phosphate + NADH + H(+). The catalysed reaction is sn-glycerol 3-phosphate + NADP(+) = dihydroxyacetone phosphate + NADPH + H(+). The protein operates within membrane lipid metabolism; glycerophospholipid metabolism. In terms of biological role, catalyzes the reduction of the glycolytic intermediate dihydroxyacetone phosphate (DHAP) to sn-glycerol 3-phosphate (G3P), the key precursor for phospholipid synthesis. This is Glycerol-3-phosphate dehydrogenase [NAD(P)+] from Tolumonas auensis (strain DSM 9187 / NBRC 110442 / TA 4).